A 331-amino-acid chain; its full sequence is Retinol dehydrogenase 13 (331 aa).

Serine 2 carries the post-translational modification N-acetylserine. 45–51 contacts NADP(+); that stretch reads GANTGIG. Position 174 (serine 174) interacts with substrate. The active-site Proton acceptor is the tyrosine 200. Serine 323 is subject to Phosphoserine.

This sequence belongs to the short-chain dehydrogenases/reductases (SDR) family. As to expression, widely expressed. In the retina, detected in the inner segment of the photoreceptor cells. Weak signals are observed in a small population of inner nuclear neurons and the inner plexiform layer.

The protein localises to the mitochondrion inner membrane. The enzyme catalyses all-trans-retinol + NADP(+) = all-trans-retinal + NADPH + H(+). It participates in cofactor metabolism; retinol metabolism. Functionally, retinol dehydrogenase with a clear preference for NADP. Oxidizes all-trans-retinol, but seems to reduce all-trans-retinal with much higher efficiency. Has no activity toward steroids. The polypeptide is Retinol dehydrogenase 13 (RDH13) (Homo sapiens (Human)).